The sequence spans 114 residues: T cell receptor beta variable 6-9 (114 aa).

The N-terminal stretch at 1 to 21 (MSIGLLCCVAFSLLWAGPVNA) is a signal peptide. One can recognise an Ig-like domain in the interval 22–114 (GVTQTPKFHI…TSVYFCASSY (93 aa)). Cys42 and Cys110 are disulfide-bonded. Asn84 is a glycosylation site (N-linked (GlcNAc...) asparagine).

Alpha-beta TR is a heterodimer composed of an alpha and beta chain; disulfide-linked. The alpha-beta TR is associated with the transmembrane signaling CD3 coreceptor proteins to form the TR-CD3 (TcR or TCR). The assembly of alpha-beta TR heterodimers with CD3 occurs in the endoplasmic reticulum where a single alpha-beta TR heterodimer associates with one CD3D-CD3E heterodimer, one CD3G-CD3E heterodimer and one CD247 homodimer forming a stable octameric structure. CD3D-CD3E and CD3G-CD3E heterodimers preferentially associate with TR alpha and TR beta chains, respectively. The association of the CD247 homodimer is the last step of TcR assembly in the endoplasmic reticulum and is required for transport to the cell surface.

It localises to the cell membrane. Its function is as follows. V region of the variable domain of T cell receptor (TR) beta chain that participates in the antigen recognition. Alpha-beta T cell receptors are antigen specific receptors which are essential to the immune response and are present on the cell surface of T lymphocytes. Recognize peptide-major histocompatibility (MH) (pMH) complexes that are displayed by antigen presenting cells (APC), a prerequisite for efficient T cell adaptive immunity against pathogens. Binding of alpha-beta TR to pMH complex initiates TR-CD3 clustering on the cell surface and intracellular activation of LCK that phosphorylates the ITAM motifs of CD3G, CD3D, CD3E and CD247 enabling the recruitment of ZAP70. In turn ZAP70 phosphorylates LAT, which recruits numerous signaling molecules to form the LAT signalosome. The LAT signalosome propagates signal branching to three major signaling pathways, the calcium, the mitogen-activated protein kinase (MAPK) kinase and the nuclear factor NF-kappa-B (NF-kB) pathways, leading to the mobilization of transcription factors that are critical for gene expression and essential for T cell growth and differentiation. The T cell repertoire is generated in the thymus, by V-(D)-J rearrangement. This repertoire is then shaped by intrathymic selection events to generate a peripheral T cell pool of self-MH restricted, non-autoaggressive T cells. Post-thymic interaction of alpha-beta TR with the pMH complexes shapes TR structural and functional avidity. This is T cell receptor beta variable 6-9 from Homo sapiens (Human).